Consider the following 261-residue polypeptide: Tryptophan synthase alpha chain (261 aa).

Residues Glu49 and Asp60 each act as proton acceptor in the active site.

Belongs to the TrpA family. As to quaternary structure, tetramer of two alpha and two beta chains.

The enzyme catalyses (1S,2R)-1-C-(indol-3-yl)glycerol 3-phosphate + L-serine = D-glyceraldehyde 3-phosphate + L-tryptophan + H2O. Its pathway is amino-acid biosynthesis; L-tryptophan biosynthesis; L-tryptophan from chorismate: step 5/5. Functionally, the alpha subunit is responsible for the aldol cleavage of indoleglycerol phosphate to indole and glyceraldehyde 3-phosphate. The chain is Tryptophan synthase alpha chain from Roseiflexus castenholzii (strain DSM 13941 / HLO8).